The chain runs to 311 residues: MKTSQNLVSVEQFSNQDVMAYLKLAQAFKNGKTVQLSQPTFAMNLFFENSTRTHTSFEMAERRLGLQVIPFDPKTSSVTKGESLLDTLKTIEAIGVNLAVVRHPRDRYYQPLLDAGFDMSLINAGDGSGQHPSQSLLDMLTIYEEFGHFDGLKIAIVGDLAHSRVARSNMALLTQLGAQVYFGGPKEWYGRDFEAYGEYQTMDQLVATMDVMMLLRVQHERLSQVNNQTFDASAYHQQYGLTAERAARMPKHAIIMHPAPVNRGVELASDLVEAPQSRIFQQMTNGVYIRMAMVASVLAHQGLISATQVEV.

2 residues coordinate carbamoyl phosphate: R52 and T53. K80 is a binding site for L-aspartate. Residues R102, H131, and Q134 each coordinate carbamoyl phosphate. L-aspartate is bound by residues R164 and R216. 2 residues coordinate carbamoyl phosphate: A259 and P260.

It belongs to the aspartate/ornithine carbamoyltransferase superfamily. ATCase family. As to quaternary structure, heterododecamer (2C3:3R2) of six catalytic PyrB chains organized as two trimers (C3), and six regulatory PyrI chains organized as three dimers (R2).

The enzyme catalyses carbamoyl phosphate + L-aspartate = N-carbamoyl-L-aspartate + phosphate + H(+). It participates in pyrimidine metabolism; UMP biosynthesis via de novo pathway; (S)-dihydroorotate from bicarbonate: step 2/3. In terms of biological role, catalyzes the condensation of carbamoyl phosphate and aspartate to form carbamoyl aspartate and inorganic phosphate, the committed step in the de novo pyrimidine nucleotide biosynthesis pathway. This chain is Aspartate carbamoyltransferase catalytic subunit, found in Lactiplantibacillus plantarum (strain ATCC BAA-793 / NCIMB 8826 / WCFS1) (Lactobacillus plantarum).